A 90-amino-acid polypeptide reads, in one-letter code: Small ribosomal subunit protein bS20 (90 aa).

The protein belongs to the bacterial ribosomal protein bS20 family.

In terms of biological role, binds directly to 16S ribosomal RNA. The sequence is that of Small ribosomal subunit protein bS20 from Rickettsia felis (strain ATCC VR-1525 / URRWXCal2) (Rickettsia azadi).